A 206-amino-acid polypeptide reads, in one-letter code: Endoplasmic reticulum transmembrane protein YET-like (206 aa).

The Lumenal portion of the chain corresponds to 1-2 (ME). The helical transmembrane segment at 3–23 (FLMTLVFLVLLVEIVFCTFFM) threads the bilayer. The Cytoplasmic segment spans residues 24–46 (LPVSMHLRKNVYNKLDKLFGGQN). Residues 47 to 67 (AKIFLKVLALLVIIVFCDSIV) form a helical membrane-spanning segment. Topologically, residues 68-101 (NSYNINKKLHTPELTGAKFDRQNEYTRMFRYQRN) are lumenal. Residues 102–122 (SYICGFCLYLFFLIYRSQGII) traverse the membrane as a helical segment. The Cytoplasmic portion of the chain corresponds to 123–206 (SQLSNVEASK…KKPKTQKKDD (84 aa)). A coiled-coil region spans residues 140-198 (KNNLNTVETLLSENEKLKTEIKDLKKMEKEHKAMKSQAENTTKEYLKLQEEYNQLLGKK). The Di-lysine motif signature appears at 203–206 (KKDD).

Belongs to the BCAP29/BCAP31 family.

Its subcellular location is the endoplasmic reticulum membrane. Functionally, may play a role in anterograde transport of membrane proteins from the endoplasmic reticulum to the Golgi. The polypeptide is Endoplasmic reticulum transmembrane protein YET-like (Dictyostelium discoideum (Social amoeba)).